We begin with the raw amino-acid sequence, 162 residues long: Shikimate kinase (162 aa).

Glycine 11 to serine 16 contributes to the ATP binding site. Serine 15 contributes to the Mg(2+) binding site. Substrate is bound by residues aspartate 33, arginine 57, and glycine 80. Arginine 116 contributes to the ATP binding site. Arginine 132 contributes to the substrate binding site.

The protein belongs to the shikimate kinase family. In terms of assembly, monomer. Requires Mg(2+) as cofactor.

The protein resides in the cytoplasm. It catalyses the reaction shikimate + ATP = 3-phosphoshikimate + ADP + H(+). The protein operates within metabolic intermediate biosynthesis; chorismate biosynthesis; chorismate from D-erythrose 4-phosphate and phosphoenolpyruvate: step 5/7. Its function is as follows. Catalyzes the specific phosphorylation of the 3-hydroxyl group of shikimic acid using ATP as a cosubstrate. The chain is Shikimate kinase from Helicobacter pylori (strain P12).